A 262-amino-acid polypeptide reads, in one-letter code: [LysW]-aminoadipate/[LysW]-glutamate kinase (262 aa).

Residues 35 to 36, Arg62, and Asn167 each bind substrate; that span reads GG.

The protein belongs to the acetylglutamate kinase family. LysZ subfamily.

Its subcellular location is the cytoplasm. It carries out the reaction [amino-group carrier protein]-C-terminal-N-(1,4-dicarboxybutan-1-yl)-L-glutamine + ATP = [amino-group carrier protein]-C-terminal-N-(1-carboxy-5-phosphooxy-5-oxopentan-1-yl)-L-glutamine + ADP. The catalysed reaction is [amino-group carrier protein]-C-terminal-gamma-(L-glutamyl)-L-glutamate + ATP = [amino-group carrier protein]-C-terminal-gamma-(5-phospho-L-glutamyl)-L-glutamate + ADP. It participates in amino-acid biosynthesis; L-lysine biosynthesis via AAA pathway; L-lysine from L-alpha-aminoadipate (Thermus route): step 2/5. Its pathway is amino-acid biosynthesis; L-arginine biosynthesis. Functionally, involved in both the arginine and lysine biosynthetic pathways. Phosphorylates the LysW-bound precursors glutamate (for arginine biosynthesis), respectively alpha-aminoadipate (for lysine biosynthesis). The sequence is that of [LysW]-aminoadipate/[LysW]-glutamate kinase from Metallosphaera sedula (strain ATCC 51363 / DSM 5348 / JCM 9185 / NBRC 15509 / TH2).